Consider the following 464-residue polypeptide: Protein FAM90A16 (464 aa).

Disordered regions lie at residues 1 to 42 (MMAR…DPRL), 70 to 389 (PATL…HDGA), and 415 to 437 (HSPE…SEAP). 2 stretches are compositionally biased toward basic and acidic residues: residues 74 to 89 (GKKE…KPRV) and 97 to 114 (NKDK…DPQR). Residues 180 to 197 (LASLSPLRKASLSSSSSL) show a composition bias toward low complexity.

It belongs to the FAM90 family.

The polypeptide is Protein FAM90A16 (Homo sapiens (Human)).